The following is a 408-amino-acid chain: Ribulose bisphosphate carboxylase/oxygenase activase, chloroplastic (408 aa).

Residues 1–32 (MQVTMKSSAVSGQRVGGARVATRSVRRAQLQV) constitute a chloroplast transit peptide. 138 to 145 (GGKGQGKT) lines the ATP pocket.

Belongs to the RuBisCO activase family. Monomer.

The protein resides in the plastid. Its subcellular location is the chloroplast stroma. Activation of RuBisCO (ribulose-1,5-bisphosphate carboxylase/oxygenase; EC 4.1.1.39) involves the ATP-dependent carboxylation of the epsilon-amino group of lysine leading to a carbamate structure. In Chlamydomonas reinhardtii (Chlamydomonas smithii), this protein is Ribulose bisphosphate carboxylase/oxygenase activase, chloroplastic.